The following is a 122-amino-acid chain: Large ribosomal subunit protein bL12 (122 aa).

The protein belongs to the bacterial ribosomal protein bL12 family. In terms of assembly, homodimer. Part of the ribosomal stalk of the 50S ribosomal subunit. Forms a multimeric L10(L12)X complex, where L10 forms an elongated spine to which 2 to 4 L12 dimers bind in a sequential fashion. Binds GTP-bound translation factors.

Functionally, forms part of the ribosomal stalk which helps the ribosome interact with GTP-bound translation factors. Is thus essential for accurate translation. This Pasteurella multocida (strain Pm70) protein is Large ribosomal subunit protein bL12.